The chain runs to 152 residues: Large ribosomal subunit protein bL17 (152 aa).

Positions 121 to 140 are disordered; the sequence is APSASQKTGKQDRAKRVKGS.

Belongs to the bacterial ribosomal protein bL17 family. As to quaternary structure, part of the 50S ribosomal subunit. Contacts protein L32.

In Pelodictyon phaeoclathratiforme (strain DSM 5477 / BU-1), this protein is Large ribosomal subunit protein bL17.